A 363-amino-acid polypeptide reads, in one-letter code: Phosphoserine aminotransferase (363 aa).

Arginine 42 is an L-glutamate binding site. Residues 76-77 (GR), tryptophan 102, threonine 156, aspartate 175, and glutamine 198 each bind pyridoxal 5'-phosphate. The residue at position 199 (lysine 199) is an N6-(pyridoxal phosphate)lysine. Position 240–241 (240–241 (NT)) interacts with pyridoxal 5'-phosphate.

The protein belongs to the class-V pyridoxal-phosphate-dependent aminotransferase family. SerC subfamily. Homodimer. Requires pyridoxal 5'-phosphate as cofactor.

Its subcellular location is the cytoplasm. The enzyme catalyses O-phospho-L-serine + 2-oxoglutarate = 3-phosphooxypyruvate + L-glutamate. The catalysed reaction is 4-(phosphooxy)-L-threonine + 2-oxoglutarate = (R)-3-hydroxy-2-oxo-4-phosphooxybutanoate + L-glutamate. It participates in amino-acid biosynthesis; L-serine biosynthesis; L-serine from 3-phospho-D-glycerate: step 2/3. The protein operates within cofactor biosynthesis; pyridoxine 5'-phosphate biosynthesis; pyridoxine 5'-phosphate from D-erythrose 4-phosphate: step 3/5. Functionally, catalyzes the reversible conversion of 3-phosphohydroxypyruvate to phosphoserine and of 3-hydroxy-2-oxo-4-phosphonooxybutanoate to phosphohydroxythreonine. The sequence is that of Phosphoserine aminotransferase from Shewanella halifaxensis (strain HAW-EB4).